Here is a 135-residue protein sequence, read N- to C-terminus: uncharacterized protein (135 aa).

Residues 56–135 are disordered; the sequence is VQSHNRGINN…QKGQLKIEKV (80 aa). Positions 64–74 are enriched in basic residues; it reads NNRRRDQKRKQ. Positions 77-89 are enriched in polar residues; the sequence is SIKQDNDLNVSSE. The span at 108–135 shows a compositional bias: basic and acidic residues; the sequence is YKETPDLDEPGSREKRVSQKGQLKIEKV.

This is an uncharacterized protein from Schizosaccharomyces pombe (strain 972 / ATCC 24843) (Fission yeast).